Consider the following 564-residue polypeptide: Arginine--tRNA ligase (564 aa).

Positions 122–132 (PNIAKPFSIGH) match the 'HIGH' region motif.

Belongs to the class-I aminoacyl-tRNA synthetase family. As to quaternary structure, monomer.

The protein resides in the cytoplasm. It catalyses the reaction tRNA(Arg) + L-arginine + ATP = L-arginyl-tRNA(Arg) + AMP + diphosphate. This is Arginine--tRNA ligase from Lactococcus lactis subsp. cremoris (strain MG1363).